The primary structure comprises 551 residues: MIKRVLTALAATLLPLGAHAADAITGAVQRQPTNWQAIVMFLIFVALTLYITYWASKRVRSRSDYYTAGGNITGFQNGLAIAGDFMSAASFLGISALVYTSGYDGLIYSLGFLVGWPIILFLIAERLRNLGRYTFADVASYRLKQGPIRTLSACGSLVVVALYLIAQMVGAGKLIQLLFGLNYHVAVVLVGVLMVLYVLFGGMLATTWVQIIKAVLLLCGASFMAFMVMKHVGFSFNNLFTEAMAVHPKGAAIMSPGGLVKDPISALSLGLGLMFGTAGLPHILMRFFTVSDAKEARKSVFYATGFMGYFYILTFIIGFGAIMLVGANPAFKDAAGQLIGGNNMAAVHLADAVGGNLFLGFISAVAFATILAVVAGLTLAGASAVSHDLYANVFRKGATERQELKVSKITVLILGVVAILLGILFENQNIAFMVGLAFSIAASCNFPIILLSMYWSKLTTRGAMVGGWLGLLTAVILMILGPTIWVQILGHEKALFPYEYPALFSIAIAFIGIWVFSATDNSPEGMREREQFRAQFIRSQTGIGIERGQAH.

14 consecutive transmembrane segments (helical) span residues 8-28 (ALAA…TGAV), 35-55 (WQAI…TYWA), 78-98 (GLAI…SALV), 105-125 (GLIY…LIAE), 151-171 (LSAC…MVGA), 185-205 (VAVV…GMLA), 208-228 (WVQI…AFMV), 264-284 (ISAL…PHIL), 305-325 (GFMG…IMLV), 357-377 (LFLG…VAGL), 406-426 (VSKI…ILFE), 430-450 (IAFM…PIIL), 465-485 (VGGW…PTIW), and 496-516 (FPYE…IWVF).

The protein belongs to the sodium:solute symporter (SSF) (TC 2.A.21) family.

The protein localises to the cell inner membrane. Its function is as follows. Transports acetate. This chain is Cation/acetate symporter ActP, found in Klebsiella pneumoniae (strain 342).